A 354-amino-acid chain; its full sequence is D-alanine--D-alanine ligase (354 aa).

Residues 154–348 enclose the ATP-grasp domain; sequence RSWFLTNNIN…FTNLIEEIIK (195 aa). 181–232 contributes to the ATP binding site; the sequence is MKRPYVIKPITQGSSIGIEVIFEEDDFNFANYDFPYGDQVIIEKYIKGRELQ. Glu301, Glu315, and Asn317 together coordinate Mg(2+).

This sequence belongs to the D-alanine--D-alanine ligase family. Requires Mg(2+) as cofactor. The cofactor is Mn(2+).

It is found in the cytoplasm. It carries out the reaction 2 D-alanine + ATP = D-alanyl-D-alanine + ADP + phosphate + H(+). The protein operates within cell wall biogenesis; peptidoglycan biosynthesis. Its function is as follows. Cell wall formation. This chain is D-alanine--D-alanine ligase, found in Rickettsia canadensis (strain McKiel).